The following is a 660-amino-acid chain: Acetyl-coenzyme A synthetase (660 aa).

CoA contacts are provided by residues 197-200 (RGGK) and Thr-317. ATP contacts are provided by residues 397 to 399 (GEP), 421 to 426 (DTWWQT), Asp-512, and Arg-528. Ser-536 lines the CoA pocket. Arg-539 provides a ligand contact to ATP. Residues Val-550, His-552, and Val-555 each contribute to the Mg(2+) site. N6-acetyllysine is present on Lys-625.

This sequence belongs to the ATP-dependent AMP-binding enzyme family. The cofactor is Mg(2+). Acetylated. Deacetylation by the SIR2-homolog deacetylase activates the enzyme.

It carries out the reaction acetate + ATP + CoA = acetyl-CoA + AMP + diphosphate. Its function is as follows. Catalyzes the conversion of acetate into acetyl-CoA (AcCoA), an essential intermediate at the junction of anabolic and catabolic pathways. AcsA undergoes a two-step reaction. In the first half reaction, AcsA combines acetate with ATP to form acetyl-adenylate (AcAMP) intermediate. In the second half reaction, it can then transfer the acetyl group from AcAMP to the sulfhydryl group of CoA, forming the product AcCoA. The protein is Acetyl-coenzyme A synthetase of Burkholderia lata (strain ATCC 17760 / DSM 23089 / LMG 22485 / NCIMB 9086 / R18194 / 383).